The following is a 462-amino-acid chain: ATP synthase subunit beta (462 aa).

151–158 (GGAGVGKT) is an ATP binding site.

It belongs to the ATPase alpha/beta chains family. In terms of assembly, F-type ATPases have 2 components, CF(1) - the catalytic core - and CF(0) - the membrane proton channel. CF(1) has five subunits: alpha(3), beta(3), gamma(1), delta(1), epsilon(1). CF(0) has four main subunits: a(1), b(1), b'(1) and c(9-12).

Its subcellular location is the cell inner membrane. It catalyses the reaction ATP + H2O + 4 H(+)(in) = ADP + phosphate + 5 H(+)(out). Produces ATP from ADP in the presence of a proton gradient across the membrane. The catalytic sites are hosted primarily by the beta subunits. The polypeptide is ATP synthase subunit beta (Chlorobium phaeobacteroides (strain BS1)).